The sequence spans 202 residues: Small ribosomal subunit protein uS4c (202 aa).

The interval 20–43 (GLTRKTTRRNSRPGQHGDQPRKPS) is disordered. The S4 RNA-binding domain occupies 90–152 (MRLDNIVFRL…ARSKQLVENY (63 aa)).

This sequence belongs to the universal ribosomal protein uS4 family. Part of the 30S ribosomal subunit. Contacts protein S5. The interaction surface between S4 and S5 is involved in control of translational fidelity.

It is found in the plastid. It localises to the chloroplast. Its function is as follows. One of the primary rRNA binding proteins, it binds directly to 16S rRNA where it nucleates assembly of the body of the 30S subunit. In terms of biological role, with S5 and S12 plays an important role in translational accuracy. This Rhodomonas salina (Cryptomonas salina) protein is Small ribosomal subunit protein uS4c (rps4).